Reading from the N-terminus, the 106-residue chain is Toxin-like structure LSTX-D8 (106 aa).

An N-terminal signal peptide occupies residues 1 to 20 (MTKVLVVVALLVTLISYSSS). The propeptide occupies 21–41 (EGIDDLEADELLSLMANEQTR). Disulfide bonds link cysteine 45–cysteine 60, cysteine 52–cysteine 69, cysteine 59–cysteine 85, and cysteine 71–cysteine 83.

The protein belongs to the neurotoxin 19 (CSTX) family. 02 (D7) subfamily. Expressed by the venom gland.

Its subcellular location is the secreted. In Lycosa singoriensis (Wolf spider), this protein is Toxin-like structure LSTX-D8.